A 269-amino-acid polypeptide reads, in one-letter code: Type II iodothyronine deiodinase (269 aa).

The Lumenal portion of the chain corresponds to 1–7; that stretch reads MGLLSVD. Residues 8–28 form a helical; Signal-anchor for type III membrane protein membrane-spanning segment; the sequence is LLITLQILPWFFSNCLFLALY. Topologically, residues 29–269 are cytoplasmic; the sequence is DSVVLLKHVI…RUVPTCELIM (241 aa). Selenocysteine 128 is an active-site residue. 2 non-standard amino acids (selenocysteine) are found at residues selenocysteine 128 and selenocysteine 261.

Belongs to the iodothyronine deiodinase family. As to quaternary structure, predominantly monomer. Can form homodimers but homodimerization is not essential for enzyme activity.

Its subcellular location is the endoplasmic reticulum membrane. The catalysed reaction is 3,3',5-triiodo-L-thyronine + iodide + A + H(+) = L-thyroxine + AH2. It catalyses the reaction 3,3'-diiodo-L-thyronine + iodide + A + H(+) = 3,3',5'-triiodo-L-thyronine + AH2. The enzyme catalyses 3'-iodo-L-thyronine + iodide + A + H(+) = 3',5'-diiodo-L-thyronine + AH2. It carries out the reaction 3,3'-diiodothyronamine + iodide + A + H(+) = 3,3',5'-triiodothyronamine + AH2. The catalysed reaction is 3'-iodothyronamine + iodide + A + H(+) = 3',5'-diiodothyronamine + AH2. Plays a crucial role in the metabolism of thyroid hormones (TH) and has specific roles in TH activation and inactivation by deiodination. Catalyzes the deiodination of L-thyroxine (T4) to 3,5,3'-triiodothyronine (T3), 3,3',5'-triiodothyronine (rT3) to 3,3'-diiodothyronine (3,3'-T2) and 3',5'-diiodothyronine (3',5'-T2) to 3'-monoiodothyronine (3'-T1) via outer-ring deiodination (ORD). Catalyzes the phenolic ring deiodinations of 3,3',5'-triiodothyronamine and 3',5'- diiodothyronamine. The polypeptide is Type II iodothyronine deiodinase (dio2) (Neoceratodus forsteri (Australian lungfish)).